Here is a 108-residue protein sequence, read N- to C-terminus: MLKGNLAGLMKQAQQMQENMKKMQEQLAQIEVEGQSGAGLVKVTMTCRNEVRRVAIDPSLLADDKDMLEDLVAAAFNDAVRKAEATSQEKMSGMTSGLPLPPGFKLPF.

Polar residues predominate over residues 85–95 (ATSQEKMSGMT). Residues 85-108 (ATSQEKMSGMTSGLPLPPGFKLPF) form a disordered region. Residues 99–108 (PLPPGFKLPF) are compositionally biased toward pro residues.

This sequence belongs to the YbaB/EbfC family. In terms of assembly, homodimer.

Its subcellular location is the cytoplasm. The protein localises to the nucleoid. Binds to DNA and alters its conformation. May be involved in regulation of gene expression, nucleoid organization and DNA protection. This Burkholderia ambifaria (strain MC40-6) protein is Nucleoid-associated protein BamMC406_1737.